The chain runs to 521 residues: MTPDSRHRRLLANRYQLVELVGSGAMGQVYRAEDKLLGGVTVAVKFLSQALLNPRMKERFEREATISALLGEKSIHIVRVRDYGLDEKEIPFYVMEYLQGENISDVIKYRPLKVERFLKIARQICFGLDCAHKGIIYQGEACPVVHRDIKPSNVLLVEDPALGELVKILDFGIAKLVQAAEESKTQAFMGTLAYCSPEQMEGKELDSRSDIYSLGVMMYEMLTGEMPLFPDNSSFGGWYEAHHHTKPHPFSARYKIPASLEALVMNCLAKSPKGRPQSVDVIIRAIDAIEAEIKAPPISDTEKTQIAPHLLNTDMEATVVAQRGPGIVPETRLPLVSELCKQLEWPSDKPKQKIVFPYVLNAAEGKLASLWVMLNQEDILTRMSSIRYNQFLLMTSPHPMVLWITVLYHREYGPRWLPCYLDLKTRSGQSFAQMLGESGTYWLLFFALENPTRCQHMLTATVAPNQCKLLKEWAQTSQSMPGGKPQVTKRLLKQELDRLKPKIEAKLSQVKPSFNKEVSGL.

The Protein kinase domain occupies 15–289 (YQLVELVGSG…DVIIRAIDAI (275 aa)). Residues 21–29 (VGSGAMGQV) and lysine 45 each bind ATP. Catalysis depends on aspartate 148, which acts as the Proton acceptor.

It belongs to the protein kinase superfamily. Ser/Thr protein kinase family. Autophosphorylated.

It catalyses the reaction L-seryl-[protein] + ATP = O-phospho-L-seryl-[protein] + ADP + H(+). The enzyme catalyses L-threonyl-[protein] + ATP = O-phospho-L-threonyl-[protein] + ADP + H(+). Its function is as follows. Protein kinase that regulates cellular motility via phosphorylation of membrane proteins. The polypeptide is Serine/threonine-protein kinase A (spkA) (Synechocystis sp. (strain ATCC 27184 / PCC 6803 / Kazusa)).